The sequence spans 176 residues: Adenine phosphoribosyltransferase (176 aa).

This sequence belongs to the purine/pyrimidine phosphoribosyltransferase family. Homodimer.

It is found in the cytoplasm. The catalysed reaction is AMP + diphosphate = 5-phospho-alpha-D-ribose 1-diphosphate + adenine. It functions in the pathway purine metabolism; AMP biosynthesis via salvage pathway; AMP from adenine: step 1/1. Functionally, catalyzes a salvage reaction resulting in the formation of AMP, that is energically less costly than de novo synthesis. The chain is Adenine phosphoribosyltransferase from Gluconacetobacter diazotrophicus (strain ATCC 49037 / DSM 5601 / CCUG 37298 / CIP 103539 / LMG 7603 / PAl5).